Reading from the N-terminus, the 361-residue chain is Phospho-N-acetylmuramoyl-pentapeptide-transferase (361 aa).

Transmembrane regions (helical) follow at residues 25–45 (RGILAALTALFLSLWMGPAVI), 73–93 (TMGGSLILLTVTLSVLLWGDL), 98–118 (VWLVLAVMICFGAIGWYDDWI), 139–159 (IFGLAAGLFLYYTADVPAAIT), 168–188 (IALPLAGVSFVVIAYFWIVGF), 200–220 (GLAIMPTVLVACALGVFAYAS), 237–257 (AGELIIICSAIAGAGLGFLWF), 264–284 (VFMGDIGALSLGAVLGTIAVI), 289–309 (MVLVIMGGVFVIETLSVIIQV), and 339–359 (VIVRFWIISVVLVLIGLATLK).

It belongs to the glycosyltransferase 4 family. MraY subfamily. The cofactor is Mg(2+).

The protein localises to the cell inner membrane. The enzyme catalyses UDP-N-acetyl-alpha-D-muramoyl-L-alanyl-gamma-D-glutamyl-meso-2,6-diaminopimeloyl-D-alanyl-D-alanine + di-trans,octa-cis-undecaprenyl phosphate = di-trans,octa-cis-undecaprenyl diphospho-N-acetyl-alpha-D-muramoyl-L-alanyl-D-glutamyl-meso-2,6-diaminopimeloyl-D-alanyl-D-alanine + UMP. The protein operates within cell wall biogenesis; peptidoglycan biosynthesis. Catalyzes the initial step of the lipid cycle reactions in the biosynthesis of the cell wall peptidoglycan: transfers peptidoglycan precursor phospho-MurNAc-pentapeptide from UDP-MurNAc-pentapeptide onto the lipid carrier undecaprenyl phosphate, yielding undecaprenyl-pyrophosphoryl-MurNAc-pentapeptide, known as lipid I. The protein is Phospho-N-acetylmuramoyl-pentapeptide-transferase of Xanthomonas oryzae pv. oryzae (strain PXO99A).